We begin with the raw amino-acid sequence, 249 residues long: uncharacterized protein (249 aa).

The protein resides in the cytoplasm. It is found in the nucleus. This is an uncharacterized protein from Schizosaccharomyces pombe (strain 972 / ATCC 24843) (Fission yeast).